Consider the following 668-residue polypeptide: MAP kinase kinase PBS2 (668 aa).

The segment covering 1–15 has biased composition (basic and acidic residues); sequence MEDKFANLSLHEKTG. Disordered stretches follow at residues 1 to 43, 61 to 120, and 181 to 313; these read MEDK…SSHY, RALK…ASSK, and NPNR…GSSG. Composition is skewed to polar residues over residues 16–43, 68–91, and 104–120; these read KSSI…SSHY, SVGS…QQIV, and SKVS…ASSK. S68 carries the phosphoserine modification. Over residues 239–250 the composition is skewed to low complexity; it reads AQQPQQFAPSPS. At S269 the chain carries Phosphoserine. Polar residues predominate over residues 270 to 300; sequence NPGSLINGVQSTSTSSSTEGPHDTVGTTPRT. Residues 301-310 show a composition bias toward low complexity; that stretch reads GNSNNSSNSG. One can recognise a Protein kinase domain in the interval 360-623; it reads LEFLDELGHG…YAALTEHPWL (264 aa). ATP contacts are provided by residues 366 to 374 and K389; that span reads LGHGNYGNV. The Proton acceptor role is filled by D485. S514 carries the post-translational modification Phosphoserine. A Phosphothreonine modification is found at T518.

The protein belongs to the protein kinase superfamily. STE Ser/Thr protein kinase family. MAP kinase kinase subfamily. In terms of assembly, interacts with NBP2, PTC1, SHO1 and STE11. Post-translationally, activated by phosphorylation by SSK2 or SSK22. Ser/Thr phosphorylation is also necessary for SHO1-mediated activation.

It localises to the cytoplasm. The enzyme catalyses L-seryl-[protein] + ATP = O-phospho-L-seryl-[protein] + ADP + H(+). It catalyses the reaction L-threonyl-[protein] + ATP = O-phospho-L-threonyl-[protein] + ADP + H(+). It carries out the reaction L-tyrosyl-[protein] + ATP = O-phospho-L-tyrosyl-[protein] + ADP + H(+). Its function is as follows. Kinase involved in a signal transduction pathway that is activated by changes in the osmolarity of the extracellular environment. Activates the MAP kinase HOG1 by concomitant phosphorylation at 'Thr-174' and 'Tyr-176'. This chain is MAP kinase kinase PBS2 (PBS2), found in Saccharomyces cerevisiae (strain ATCC 204508 / S288c) (Baker's yeast).